Consider the following 317-residue polypeptide: UDP-3-O-acylglucosamine N-acyltransferase (317 aa).

The Proton acceptor role is filled by His229.

It belongs to the transferase hexapeptide repeat family. LpxD subfamily. Homotrimer.

The enzyme catalyses a UDP-3-O-[(3R)-3-hydroxyacyl]-alpha-D-glucosamine + a (3R)-hydroxyacyl-[ACP] = a UDP-2-N,3-O-bis[(3R)-3-hydroxyacyl]-alpha-D-glucosamine + holo-[ACP] + H(+). The protein operates within bacterial outer membrane biogenesis; LPS lipid A biosynthesis. In terms of biological role, catalyzes the N-acylation of UDP-3-O-acylglucosamine using 3-hydroxyacyl-ACP as the acyl donor. Is involved in the biosynthesis of lipid A, a phosphorylated glycolipid that anchors the lipopolysaccharide to the outer membrane of the cell. In Campylobacter curvus (strain 525.92), this protein is UDP-3-O-acylglucosamine N-acyltransferase.